The chain runs to 519 residues: Carboxyl-terminal-processing peptidase 3, chloroplastic (519 aa).

Residues 186–274 form the PDZ domain; it reads YQSFRIGSDG…IKLKNVNGSG (89 aa). Catalysis depends on charge relay system residues Ser407 and Lys432.

It belongs to the peptidase S41A family.

The protein resides in the plastid. Its subcellular location is the chloroplast thylakoid lumen. It catalyses the reaction The enzyme shows specific recognition of a C-terminal tripeptide, Xaa-Yaa-Zaa, in which Xaa is preferably Ala or Leu, Yaa is preferably Ala or Tyr, and Zaa is preferably Ala, but then cleaves at a variable distance from the C-terminus. A typical cleavage is -Ala-Ala-|-Arg-Ala-Ala-Lys-Glu-Asn-Tyr-Ala-Leu-Ala-Ala.. In terms of biological role, protease involved in the C-terminal processing of the chloroplastic D1 protein of photosystem II. This proteolytic processing is necessary to allow the light-driven assembly of the tetranuclear manganese cluster, which is responsible for photosynthetic water oxidation. The protein is Carboxyl-terminal-processing peptidase 3, chloroplastic (CTPA3) of Arabidopsis thaliana (Mouse-ear cress).